A 139-amino-acid polypeptide reads, in one-letter code: Large ribosomal subunit protein eL34 (139 aa).

The disordered stretch occupies residues 113–139 (VSKPPKIAKAPAAAAAAKPAKTATKSK).

It belongs to the eukaryotic ribosomal protein eL34 family.

The polypeptide is Large ribosomal subunit protein eL34 (RpL34) (Ochlerotatus triseriatus (Eastern treehole mosquito)).